The chain runs to 75 residues: Metallothionein-like protein 1 (75 aa).

It belongs to the metallothionein superfamily. Type 15 family.

In terms of biological role, metallothioneins have a high content of cysteine residues that bind various heavy metals. In Cicer arietinum (Chickpea), this protein is Metallothionein-like protein 1.